We begin with the raw amino-acid sequence, 511 residues long: Dihydrolipoyl dehydrogenase, mitochondrial (511 aa).

FAD contacts are provided by residues 75 to 84, lysine 93, glycine 157, and 187 to 189; these read EKRGTLGGTC and TGS. Cysteine 84 and cysteine 89 are oxidised to a cystine. NAD(+)-binding positions include 224–231, glutamate 247, leucine 281, and glycine 316; that span reads GGGIIGLE. FAD contacts are provided by residues aspartate 357 and 363 to 366; that span reads MLAH. Histidine 489 functions as the Proton acceptor in the catalytic mechanism.

This sequence belongs to the class-I pyridine nucleotide-disulfide oxidoreductase family. Homodimer. It depends on FAD as a cofactor.

It localises to the mitochondrion matrix. It catalyses the reaction N(6)-[(R)-dihydrolipoyl]-L-lysyl-[protein] + NAD(+) = N(6)-[(R)-lipoyl]-L-lysyl-[protein] + NADH + H(+). In terms of biological role, lipoamide dehydrogenase is a component of the alpha-ketoacid dehydrogenase complexes. Malfunction of this protein blocks the progression of cell cycle from G1 to S phase. The chain is Dihydrolipoyl dehydrogenase, mitochondrial (dld1) from Schizosaccharomyces pombe (strain 972 / ATCC 24843) (Fission yeast).